We begin with the raw amino-acid sequence, 285 residues long: Protein phosphatase 1 regulatory subunit 3C (285 aa).

The short motif at 72-75 (KVVF) is the PP1-binding motif element. The CBM21 domain maps to 133-241 (RKRLMKNSVC…NNNGKNYALV (109 aa)).

Interacts with PPP1CC catalytic subunit of PP1 and associates with glycogen. Forms complexes with glycogen phosphorylase, glycogen synthase and phosphorylase kinase which is necessary for its regulation of PP1 activity. In terms of tissue distribution, ubiquitously expressed in the examined tissues including brain, muscle, liver and spleen under normoxic condition. Its expression is higher in insulin sensitive tissues (liver and muscle) than in the brain and spleen. Significantly increased expression in the liver and muscle under short-term (1-12 hours) hypoxia exposure. Significantly increased expression after long-term (natural) hypoxia exposure in liver and spleen. No significant differences in expression in brain for any time periods.

In terms of biological role, acts as a glycogen-targeting subunit for PP1 and regulates its activity. Activates glycogen synthase, reduces glycogen phosphorylase activity and limits glycogen breakdown. The polypeptide is Protein phosphatase 1 regulatory subunit 3C (Clarias batrachus (Walking catfish)).